Consider the following 299-residue polypeptide: Formin-like protein 12 (299 aa).

The FH2 domain occupies 1–295 (MASNCEKMLS…LEKRKMNIKQ (295 aa)).

This sequence belongs to the formin-like family. Class-II subfamily.

This is Formin-like protein 12 (FH12) from Arabidopsis thaliana (Mouse-ear cress).